A 593-amino-acid polypeptide reads, in one-letter code: Immunoglobulin G-binding protein G (593 aa).

Positions 1–33 are cleaved as a signal peptide; sequence MEKEKKVKYFLRKSAFGLASVSAAFLVGSTVFA. 5 consecutive repeat copies span residues 104–140, 179–215, 254–290, 303–357, and 373–427. Positions 104–290 are 3 X 37 AA repeats; the sequence is LAKAKADALK…AKTVEGVKAL (187 aa). The 2 X 55 AA repeats stretch occupies residues 303 to 427; the sequence is TYKLILNGKT…DATKTFTVTE (125 aa). A disordered region spans residues 503 to 567; the sequence is PGDAPTEPEK…TLPTTGEGSN (65 aa). A compositionally biased stretch (basic and acidic residues) spans 529–557; that stretch reads AKDDAKKDDTKKEDAKKPEAKKEDAKKAE. The interval 531–555 is 5 X 5 AA repeats of [DE]-D-A-K-K; the sequence is DDAKKDDTKKEDAKKPEAKKEDAKK. The LPXTG sorting signal signature appears at 559-563; that stretch reads LPTTG. Thr562 carries the pentaglycyl murein peptidoglycan amidated threonine modification. A propeptide spans 563–593 (removed by sortase); it reads GEGSNPFFTAAALAVMAGAGALAVASKRKED.

It is found in the secreted. It localises to the cell wall. This Streptococcus sp. group G protein is Immunoglobulin G-binding protein G (spg).